Consider the following 693-residue polypeptide: Bacterial dynamin-like protein (693 aa).

Topologically, residues 1 to 521 are cytoplasmic; it reads MVNQVATDRF…DNSPGWAKWA (521 aa). Residues 66–313 enclose the Dynamin-type G domain; sequence QQGVFRLLVL…QADLDGTGFP (248 aa). The tract at residues 76 to 83 is G1 motif; it reads GDMKRGKS. 79–84 is a GTP binding site; it reads KRGKST. The G2 motif stretch occupies residues 102–103; sequence CT. The G3 motif stretch occupies residues 180–183; the sequence is DSPG. Residue 235–241 participates in GTP binding; the sequence is FLVNAWD. The segment at 238-241 is G4 motif; the sequence is NAWD. A region of interest (G5 motif) is located at residue Asn-268. 292–293 provides a ligand contact to GTP; the sequence is SI. The tract at residues 311 to 571 is middle domain; sequence GFPKFMDSLN…TAVTGILLGP (261 aa). Residues 347–378 are a coiled coil; that stretch reads REAVARRIPLLEQDVNELKKRIDSVEPEFNKL. Residues 522–574 lie within the membrane without spanning it; the sequence is MGLLSLSKGNLAGFALAGAGFDWKNILLNYFTVIGIGGIITAVTGILLGPIGF. The interval 572 to 606 is paddle domain; that stretch reads IGFALLGLGVGFLQADQARRELVKTAKKELVKHLP. Topologically, residues 575–693 are cytoplasmic; it reads ALLGLGVGFL…AYSNLLAYYS (119 aa). Residues 607–693 form a GED region; that stretch reads QVAHEQSQVV…AYSNLLAYYS (87 aa). A coiled-coil region spans residues 661 to 688; it reads ESEFNRLKNLQEDVIAQLQKIEAAYSNL.

The protein belongs to the TRAFAC class dynamin-like GTPase superfamily. Dynamin/Fzo/YdjA family. Mitofusin subfamily. As to quaternary structure, homodimer. Self-assembles in the presence of GMP-PNP and liposomes, and probably also in the presence of GTP.

The protein resides in the cell inner membrane. It carries out the reaction GTP + H2O = GDP + phosphate + H(+). Its function is as follows. Dynamin-related GTPase probably involved in membrane remodeling. Lipid and nucleotide-binding are thought to induce a large intramolecular rearrangement, leading to assembly on lipid bilayers and possible membrane curving. In the presence of the non-hydrolyzable GTP analog GMP-PNP self-assembles on a lipid bilayer; this does not stimulate subsequent GTPase activity. Does not bind lipids in the presence of GDP; perhaps GTP hydrolysis disrupts membrane-binding. In Nostoc punctiforme (strain ATCC 29133 / PCC 73102), this protein is Bacterial dynamin-like protein.